The sequence spans 277 residues: Shikimate dehydrogenase (NADP(+)) (277 aa).

Shikimate-binding positions include 18-20 (SKS) and threonine 65. Catalysis depends on lysine 69, which acts as the Proton acceptor. Glutamate 81 serves as a coordination point for NADP(+). 2 residues coordinate shikimate: asparagine 90 and aspartate 106. Residues 130 to 134 (GAGGA), 154 to 159 (NRTFSK), and methionine 217 each bind NADP(+). Tyrosine 219 is a binding site for shikimate. Position 241 (glycine 241) interacts with NADP(+).

The protein belongs to the shikimate dehydrogenase family. In terms of assembly, homodimer.

The catalysed reaction is shikimate + NADP(+) = 3-dehydroshikimate + NADPH + H(+). The protein operates within metabolic intermediate biosynthesis; chorismate biosynthesis; chorismate from D-erythrose 4-phosphate and phosphoenolpyruvate: step 4/7. Its function is as follows. Involved in the biosynthesis of the chorismate, which leads to the biosynthesis of aromatic amino acids. Catalyzes the reversible NADPH linked reduction of 3-dehydroshikimate (DHSA) to yield shikimate (SA). The protein is Shikimate dehydrogenase (NADP(+)) of Vibrio campbellii (strain ATCC BAA-1116).